Consider the following 526-residue polypeptide: ATP synthase subunit alpha (526 aa).

171–178 (GDRQTGKT) provides a ligand contact to ATP.

It belongs to the ATPase alpha/beta chains family. In terms of assembly, F-type ATPases have 2 components, CF(1) - the catalytic core - and CF(0) - the membrane proton channel. CF(1) has five subunits: alpha(3), beta(3), gamma(1), delta(1), epsilon(1). CF(0) has four main subunits: a(1), b(1), b'(1) and c(9-12).

The protein resides in the cell inner membrane. It catalyses the reaction ATP + H2O + 4 H(+)(in) = ADP + phosphate + 5 H(+)(out). Its function is as follows. Produces ATP from ADP in the presence of a proton gradient across the membrane. The alpha chain is a regulatory subunit. The protein is ATP synthase subunit alpha of Chlorobium phaeovibrioides (strain DSM 265 / 1930) (Prosthecochloris vibrioformis (strain DSM 265)).